Consider the following 718-residue polypeptide: SANT and BTB domain regulator of class switch recombination (718 aa).

The region spanning 21 to 59 (DMILYPLIGIPQTINWETVARLVPGLTPKECVKRFDELK) is the SANT domain. Residues 147 to 255 (MVIHVCDEAK…QCIQYCHKNM (109 aa)) form the BTB domain. Residues 555–576 (SEEEEYTTGSEVTEDEVGDEEE) show a composition bias toward acidic residues. Disordered stretches follow at residues 555 to 622 (SEEE…SPFV) and 690 to 718 (RASV…GRPA). Basic residues predominate over residues 580-595 (KQRKKEKPKKFTKPPK). Residues 604–615 (QKKEKTLEKSTS) are compositionally biased toward basic and acidic residues.

The protein belongs to the KIAA1841 family. Homodimer. Interacts (via the BTB domain) with HDAC1 and NCOR2.

Functionally, negatively regulates class switch recombination or isotype switching in splenic B-cells. This chain is SANT and BTB domain regulator of class switch recombination, found in Mus musculus (Mouse).